The following is a 296-amino-acid chain: MPLPTDPSPSLSAYAHPERLVTGDWLYFHLGKPGLAIVESDENVLLYDVGHIPGAVKVDWHTDLNDPKVRDYITGEQFADLMNRKGIARDDTVVIYGDKSNWWAAYALWVFTLFGHPDVRLLNGGRDLWLAERRDTSLAVPNKTSTSYPVVNRNDAPIRAFKDDVLAILGTQPLIDVRSLDEYTGKCTEMPDSPEESVLRAGHIPTARSIPWEMTVDKSGRFRSSEELERLYDFITPNDKTIVYCRIGERSSHTWFVLTHLLGKPGVRNYDGSWTEWGNTVRVPITAGESPGAVPV.

Rhodanese domains are found at residues 31–138 (GKPG…DTSL) and 168–286 (ILGT…VPIT). Cys245 acts as the Cysteine persulfide intermediate in catalysis. Arg250 lines the substrate pocket.

It catalyses the reaction thiosulfate + hydrogen cyanide = thiocyanate + sulfite + 2 H(+). This Mycobacterium leprae (strain TN) protein is Putative thiosulfate sulfurtransferase SseA (sseA).